The chain runs to 20 residues: Small ribosomal subunit protein bS20 (20 aa).

The protein belongs to the bacterial ribosomal protein bS20 family.

Its function is as follows. Binds directly to 16S ribosomal RNA. This chain is Small ribosomal subunit protein bS20 (rpsT), found in Brevundimonas diminuta (Pseudomonas diminuta).